Here is a 367-residue protein sequence, read N- to C-terminus: Isocitrate dehydrogenase [NAD] regulatory subunit 2, mitochondrial (367 aa).

The transit peptide at 1–25 directs the protein to the mitochondrion; that stretch reads MSRQSFSLLKNLRSIASGSKIQTRS.

The protein belongs to the isocitrate and isopropylmalate dehydrogenases family. In terms of assembly, heterooligomer of catalytic and regulatory subunits. In terms of tissue distribution, ubiquitous. Predominantly expressed in roots, stems and leaves.

It localises to the mitochondrion. Functionally, performs an essential role in the oxidative function of the citric acid cycle. This is Isocitrate dehydrogenase [NAD] regulatory subunit 2, mitochondrial (IDH2) from Arabidopsis thaliana (Mouse-ear cress).